A 130-amino-acid chain; its full sequence is Small ribosomal subunit protein uS9 (130 aa).

Belongs to the universal ribosomal protein uS9 family.

This chain is Small ribosomal subunit protein uS9, found in Onion yellows phytoplasma (strain OY-M).